We begin with the raw amino-acid sequence, 258 residues long: Tegument protein VP22 (258 aa).

The disordered stretch occupies residues 66-143 (VQPAARGRDR…RAPPGANAVA (78 aa)). Low complexity predominate over residues 77–118 (AAAGTTVAAPAAAPARRSSSRASSRPPRAAADPPVLRPATRG). Positions 131 to 134 (PRPR) match the Nuclear localization signal motif. A Nuclear export signal motif is present at residues 204–216 (LDRMLKSAAIRIL). Positions 234–258 (RAQRPAARGSTSGGESRLRGERARP) are disordered. Residues 249 to 258 (SRLRGERARP) are compositionally biased toward basic and acidic residues.

Belongs to the alphaherpesvirinae VP22 tegument protein family. Interacts with gE (via C-terminus); this interaction is necessary for the recruitment of VP22 to the Golgi and its packaging into virions. Interacts with gM (via C-terminus). Interacts with VP16; this interaction allows the formation of a tripartite complex composed of VP16, VP22 and UL41/VHS. Interacts with the capsid-binding protein UL16. Interacts with host CGAS. In terms of processing, highly phosphorylated in the host cell. Packaging is selective for underphosphorylated forms.

It localises to the virion tegument. The protein resides in the host cytoplasm. Its subcellular location is the host nucleus. The protein localises to the host Golgi apparatus. Functionally, tegument protein that plays different roles during the time course of infection. Participates in both the accumulation of viral mRNAs and viral protein translation at late time of infection. Modulates the RNase activity of the virion host shutoff protein UL41 probably to ensure necessary levels of key cellular mRNAs and proteins. Plays a role in microtubule reorganization that occurs after viral infection by stabilizing microtubule network. Plays a role in the inhibition of host innate immune system by targeting the CGAS enzymatic activity which is the principal cytosolic DNA sensor that detects invading viral DNA. Acts by mediating disruption of liquid-like droplets in which CGAS is activated, thereby preventing CGAS activity. The sequence is that of Tegument protein VP22 from Bovine herpesvirus 1.1 (strain Cooper) (BoHV-1).